The primary structure comprises 389 residues: Na(+)/H(+) antiporter NhaA (389 aa).

The next 11 helical transmembrane spans lie at 17–37 (ILLL…LAGL), 59–79 (LLLW…GLEV), 95–115 (SLPT…YLLF), 124–144 (AGWA…MALL), 154–174 (VFLL…IALF), 177–197 (TDLS…LVAL), 213–233 (LVLW…GVII), 261–281 (FLIL…NMSL), 287–307 (PVPV…VMLF), 328–348 (IAPV…IASL), and 363–383 (LGTL…LSKV).

Belongs to the NhaA Na(+)/H(+) (TC 2.A.33) antiporter family.

The protein localises to the cell inner membrane. It carries out the reaction Na(+)(in) + 2 H(+)(out) = Na(+)(out) + 2 H(+)(in). Its function is as follows. Na(+)/H(+) antiporter that extrudes sodium in exchange for external protons. The sequence is that of Na(+)/H(+) antiporter NhaA from Shewanella sp. (strain MR-7).